The following is a 275-amino-acid chain: Dermonecrotic toxin LruSicTox-alphaIV1 (275 aa).

The active site involves histidine 5. Mg(2+) contacts are provided by glutamate 25 and aspartate 27. Catalysis depends on histidine 41, which acts as the Nucleophile. Intrachain disulfides connect cysteine 45–cysteine 51 and cysteine 47–cysteine 192. Residue aspartate 85 coordinates Mg(2+).

This sequence belongs to the arthropod phospholipase D family. Class II subfamily. Mg(2+) is required as a cofactor. Expressed by the venom gland.

The protein resides in the secreted. The enzyme catalyses an N-(acyl)-sphingosylphosphocholine = an N-(acyl)-sphingosyl-1,3-cyclic phosphate + choline. It catalyses the reaction an N-(acyl)-sphingosylphosphoethanolamine = an N-(acyl)-sphingosyl-1,3-cyclic phosphate + ethanolamine. The catalysed reaction is a 1-acyl-sn-glycero-3-phosphocholine = a 1-acyl-sn-glycero-2,3-cyclic phosphate + choline. It carries out the reaction a 1-acyl-sn-glycero-3-phosphoethanolamine = a 1-acyl-sn-glycero-2,3-cyclic phosphate + ethanolamine. Its function is as follows. Dermonecrotic toxins cleave the phosphodiester linkage between the phosphate and headgroup of certain phospholipids (sphingolipid and lysolipid substrates), forming an alcohol (often choline) and a cyclic phosphate. This toxin acts on sphingomyelin (SM). It may also act on ceramide phosphoethanolamine (CPE), lysophosphatidylcholine (LPC) and lysophosphatidylethanolamine (LPE), but not on lysophosphatidylserine (LPS), and lysophosphatidylglycerol (LPG). It acts by transphosphatidylation, releasing exclusively cyclic phosphate products as second products. Induces dermonecrosis, hemolysis, increased vascular permeability, edema, inflammatory response, and platelet aggregation. This chain is Dermonecrotic toxin LruSicTox-alphaIV1, found in Loxosceles rufescens (Mediterranean recluse spider).